A 622-amino-acid polypeptide reads, in one-letter code: 1-deoxy-D-xylulose-5-phosphate synthase (622 aa).

Residues H74 and 115 to 117 (GHS) each bind thiamine diphosphate. D146 is a Mg(2+) binding site. Thiamine diphosphate-binding positions include 147 to 148 (GA), N177, F285, and E366. N177 serves as a coordination point for Mg(2+).

The protein belongs to the transketolase family. DXPS subfamily. As to quaternary structure, homodimer. The cofactor is Mg(2+). Thiamine diphosphate is required as a cofactor.

It carries out the reaction D-glyceraldehyde 3-phosphate + pyruvate + H(+) = 1-deoxy-D-xylulose 5-phosphate + CO2. It participates in metabolic intermediate biosynthesis; 1-deoxy-D-xylulose 5-phosphate biosynthesis; 1-deoxy-D-xylulose 5-phosphate from D-glyceraldehyde 3-phosphate and pyruvate: step 1/1. In terms of biological role, catalyzes the acyloin condensation reaction between C atoms 2 and 3 of pyruvate and glyceraldehyde 3-phosphate to yield 1-deoxy-D-xylulose-5-phosphate (DXP). The sequence is that of 1-deoxy-D-xylulose-5-phosphate synthase from Magnetococcus marinus (strain ATCC BAA-1437 / JCM 17883 / MC-1).